Here is a 79-residue protein sequence, read N- to C-terminus: Major outer membrane lipoprotein Lpp 2 (79 aa).

Residues Met1–Gly21 form the signal peptide. A lipid anchor (N-palmitoyl cysteine) is attached at Cys22. A lipid anchor (S-diacylglycerol cysteine) is attached at Cys22. Repeats lie at residues Asn25–Val35 and Ser39–Val49. Positions Ile28–Arg69 form a coiled coil. Residue Lys79 is modified to N6-murein peptidoglycan lysine.

Belongs to the Lpp family. As to quaternary structure, homotrimer.

It is found in the cell outer membrane. It localises to the secreted. The protein localises to the cell wall. Plays an important role in virulence. A highly abundant outer membrane lipoprotein that controls the distance between the inner and outer membranes. The only protein known to be covalently linked to the peptidoglycan network (PGN). Also non-covalently binds the PGN. The link between the cell outer membrane and PGN contributes to maintenance of the structural and functional integrity of the cell envelope, and maintains the correct distance between the PGN and the outer membrane. The polypeptide is Major outer membrane lipoprotein Lpp 2 (Salmonella typhimurium (strain LT2 / SGSC1412 / ATCC 700720)).